The chain runs to 466 residues: F-box only protein 15 (466 aa).

An F-box domain is found at 27 to 73; it reads SASLDSLPSEVLLKILSYLDAAALLCAGCVNRRFYHLANDNFIWIRI.

As to quaternary structure, directly interacts with SKP1 and CUL1.

Functionally, substrate-recognition component of the SCF (SKP1-CUL1-F-box protein)-type E3 ubiquitin ligase complex. The chain is F-box only protein 15 (FBXO15) from Bos taurus (Bovine).